We begin with the raw amino-acid sequence, 213 residues long: Orotate phosphoribosyltransferase (213 aa).

Lys26 contributes to the 5-phospho-alpha-D-ribose 1-diphosphate binding site. Phe34 to Phe35 contributes to the orotate binding site. 5-phospho-alpha-D-ribose 1-diphosphate contacts are provided by residues Tyr72 to Lys73, Arg99, Lys100, Lys103, His105, and Asp124 to Ala132. 2 residues coordinate orotate: Thr128 and Arg156.

Belongs to the purine/pyrimidine phosphoribosyltransferase family. PyrE subfamily. Homodimer. Mg(2+) is required as a cofactor.

The catalysed reaction is orotidine 5'-phosphate + diphosphate = orotate + 5-phospho-alpha-D-ribose 1-diphosphate. It functions in the pathway pyrimidine metabolism; UMP biosynthesis via de novo pathway; UMP from orotate: step 1/2. Its function is as follows. Catalyzes the transfer of a ribosyl phosphate group from 5-phosphoribose 1-diphosphate to orotate, leading to the formation of orotidine monophosphate (OMP). The polypeptide is Orotate phosphoribosyltransferase (Haemophilus influenzae (strain 86-028NP)).